A 137-amino-acid polypeptide reads, in one-letter code: Probable DNA-directed RNA polymerases I, II, and III subunit RPABC2 (137 aa).

Composition is skewed to acidic residues over residues 1–27 (MADE…VIEE) and 34–43 (NEDEDDDNVD). A disordered region spans residues 1-43 (MADEDDYQDMDNDDFVDDNEMEDVIEEDPQRPDNEDEDDDNVD).

The protein belongs to the archaeal Rpo6/eukaryotic RPB6 RNA polymerase subunit family. Component of the RNA polymerase I (Pol I), RNA polymerase II (Pol II) and RNA polymerase III (Pol III) complexes consisting of at least 13, 12 and 17 subunits, respectively.

It localises to the nucleus. Functionally, DNA-dependent RNA polymerases catalyze the transcription of DNA into RNA using the four ribonucleoside triphosphates as substrates. Common component of RNA polymerases I, II and III which synthesize ribosomal RNA precursors, mRNA precursors and many functional non-coding RNAs, and small RNAs, such as 5S rRNA and tRNAs, respectively. Pol II is the central component of the basal RNA polymerase II transcription machinery. Pols are composed of mobile elements that move relative to each other. In Pol II, RPB6 is part of the clamp element and together with parts of RPB1 and RPB2 forms a pocket to which the RPB4-RPB7 subcomplex binds. This is Probable DNA-directed RNA polymerases I, II, and III subunit RPABC2 (rpb-6) from Caenorhabditis elegans.